A 411-amino-acid chain; its full sequence is Anthranilate synthase component 1 (411 aa).

L-tryptophan contacts are provided by residues serine 27 and 203-205 (PYM). 237-238 (GT) serves as a coordination point for chorismate. Glutamate 262 serves as a coordination point for Mg(2+). Chorismate contacts are provided by residues tyrosine 350, arginine 369, 382-384 (GAG), and glycine 384. Glutamate 397 provides a ligand contact to Mg(2+).

It belongs to the anthranilate synthase component I family. As to quaternary structure, heterotetramer consisting of two non-identical subunits: a beta subunit (TrpG) and a large alpha subunit (TrpE). The cofactor is Mg(2+).

The catalysed reaction is chorismate + L-glutamine = anthranilate + pyruvate + L-glutamate + H(+). The protein operates within amino-acid biosynthesis; L-tryptophan biosynthesis; L-tryptophan from chorismate: step 1/5. Feedback inhibited by tryptophan. Functionally, part of a heterotetrameric complex that catalyzes the two-step biosynthesis of anthranilate, an intermediate in the biosynthesis of L-tryptophan. In the first step, the glutamine-binding beta subunit (TrpG) of anthranilate synthase (AS) provides the glutamine amidotransferase activity which generates ammonia as a substrate that, along with chorismate, is used in the second step, catalyzed by the large alpha subunit of AS (TrpE) to produce anthranilate. In the absence of TrpG, TrpE can synthesize anthranilate directly from chorismate and high concentrations of ammonia. This chain is Anthranilate synthase component 1 (trpE), found in Archaeoglobus fulgidus (strain ATCC 49558 / DSM 4304 / JCM 9628 / NBRC 100126 / VC-16).